Here is a 102-residue protein sequence, read N- to C-terminus: UPF0045 protein Mb1933 (102 aa).

Belongs to the UPF0045 family.

This is UPF0045 protein Mb1933 from Mycobacterium bovis (strain ATCC BAA-935 / AF2122/97).